Here is a 407-residue protein sequence, read N- to C-terminus: Transmembrane protein 184B (407 aa).

Over residues 1-28 (MTVRGAALAPDPASPTTTTASPSVSATP) the composition is skewed to low complexity. Positions 1 to 31 (MTVRGAALAPDPASPTTTTASPSVSATPEGS) are disordered. The next 7 membrane-spanning stretches (helical) occupy residues 40–60 (FLMTTAAQAISGFFVWTALLI), 84–104 (ILFIVPIYAFDSWLSLLFFTN), 121–141 (FVIYNFLSLCYEYLGGESAIM), 178–198 (LQFCVVKPLMAVSTVILQAFG), 214–234 (VTIIYNISVSLALYALFLFYF), 249–269 (FFMVKSVIFLSFWQGMLLAIL), and 290–310 (VAAGYQDFIICVEMFFAALAL). Residues 369 to 395 (TLEPGPTWRGGTHSLSRSHSLSGARDN) form a disordered region. Residues Ser-388, Ser-402, and Ser-403 each carry the phosphoserine modification.

The protein belongs to the TMEM184 family.

It is found in the membrane. Functionally, may activate the MAP kinase signaling pathway. The protein is Transmembrane protein 184B (Tmem184b) of Mus musculus (Mouse).